Reading from the N-terminus, the 346-residue chain is MIESDRIITASPFSSQEEVIERALRPVQLDDYVGQEKIREQLKIFIEAARLRQEALDHVLLFGPPGLGKTTLAHIIAREMGVNLRQTSGPVLERAGDLAALLTNLETNDVLFIDEIHRLSPVVEEILYPAMEDYQLDIMIGEGAAARSVKIDLPSFTLVGATTRAGMLTNPLRDRFGIVSRLEFYTADELGKIVTRSAGLLNVDVTADGAREIACRSRGTPRIANRLLRRVRDFAEVRANGRIDRPVADAALQMLDVDATGLDVLDRKLLLAVLEKFGGGPVGVDNLAAAINEERDTIEEVLEPYLIQQGFLQRTPRGRMATTMAYQHFDIIPSHQTTVPSLFDPD.

Residues 4 to 185 (SDRIITASPF…FGIVSRLEFY (182 aa)) form a large ATPase domain (RuvB-L) region. ATP is bound by residues leucine 24, arginine 25, glycine 66, lysine 69, threonine 70, threonine 71, 132-134 (EDY), arginine 175, tyrosine 185, and arginine 222. A Mg(2+)-binding site is contributed by threonine 70. Residues 186-256 (TADELGKIVT…VADAALQMLD (71 aa)) are small ATPAse domain (RuvB-S). The tract at residues 259–346 (ATGLDVLDRK…TTVPSLFDPD (88 aa)) is head domain (RuvB-H). Residues arginine 295, arginine 314, and arginine 319 each contribute to the DNA site.

It belongs to the RuvB family. In terms of assembly, homohexamer. Forms an RuvA(8)-RuvB(12)-Holliday junction (HJ) complex. HJ DNA is sandwiched between 2 RuvA tetramers; dsDNA enters through RuvA and exits via RuvB. An RuvB hexamer assembles on each DNA strand where it exits the tetramer. Each RuvB hexamer is contacted by two RuvA subunits (via domain III) on 2 adjacent RuvB subunits; this complex drives branch migration. In the full resolvosome a probable DNA-RuvA(4)-RuvB(12)-RuvC(2) complex forms which resolves the HJ.

The protein resides in the cytoplasm. It carries out the reaction ATP + H2O = ADP + phosphate + H(+). The RuvA-RuvB-RuvC complex processes Holliday junction (HJ) DNA during genetic recombination and DNA repair, while the RuvA-RuvB complex plays an important role in the rescue of blocked DNA replication forks via replication fork reversal (RFR). RuvA specifically binds to HJ cruciform DNA, conferring on it an open structure. The RuvB hexamer acts as an ATP-dependent pump, pulling dsDNA into and through the RuvAB complex. RuvB forms 2 homohexamers on either side of HJ DNA bound by 1 or 2 RuvA tetramers; 4 subunits per hexamer contact DNA at a time. Coordinated motions by a converter formed by DNA-disengaged RuvB subunits stimulates ATP hydrolysis and nucleotide exchange. Immobilization of the converter enables RuvB to convert the ATP-contained energy into a lever motion, pulling 2 nucleotides of DNA out of the RuvA tetramer per ATP hydrolyzed, thus driving DNA branch migration. The RuvB motors rotate together with the DNA substrate, which together with the progressing nucleotide cycle form the mechanistic basis for DNA recombination by continuous HJ branch migration. Branch migration allows RuvC to scan DNA until it finds its consensus sequence, where it cleaves and resolves cruciform DNA. In Nitrosomonas europaea (strain ATCC 19718 / CIP 103999 / KCTC 2705 / NBRC 14298), this protein is Holliday junction branch migration complex subunit RuvB.